The primary structure comprises 304 residues: Glutaminase (304 aa).

Substrate-binding residues include serine 63, asparagine 114, glutamate 158, asparagine 165, tyrosine 189, tyrosine 240, and valine 258.

It belongs to the glutaminase family. Homotetramer.

It catalyses the reaction L-glutamine + H2O = L-glutamate + NH4(+). In Shewanella amazonensis (strain ATCC BAA-1098 / SB2B), this protein is Glutaminase.